A 115-amino-acid chain; its full sequence is Gonadotropin subunit beta-2 (115 aa).

6 cysteine pairs are disulfide-bonded: Cys6–Cys54, Cys20–Cys69, Cys23–Cys107, Cys31–Cys85, Cys35–Cys87, and Cys90–Cys97. Asn10 is a glycosylation site (N-linked (GlcNAc...) asparagine).

The protein belongs to the glycoprotein hormones subunit beta family. Heterodimer of an alpha and a beta chain.

Its subcellular location is the secreted. Involved in gametogenesis and steroidogenesis. This Thunnus obesus (Bigeye tuna) protein is Gonadotropin subunit beta-2 (cgbb).